The primary structure comprises 496 residues: Hemophilin secretion modulator (496 aa).

The signal sequence occupies residues 1-19; the sequence is MKRTLLCCLTLLSCPFLYA. Beta stranded transmembrane passes span 198 to 208, 253 to 263, 268 to 277, 291 to 301, 305 to 315, 327 to 337, 341 to 351, 365 to 374, 380 to 389, 403 to 413, 418 to 427, 446 to 455, 462 to 472, and 486 to 495; these read WQGSVSAGYTY, DYEASLIKRYA, HGVALRALAF, TININAGYSYF, NQIGVSPLFEH, WGARAEWMHFI, KAFKLEAESKD, SSAFATFWKI, TFFGGLDVLD, QGVRLGLSKSW, NTTLLSSYRW, QNHTFVVQMP, MTPNLTYRYNH, and HNISFKLEHR.

This sequence belongs to the Slam family.

It is found in the cell outer membrane. Its function is as follows. Part of a high affinity heme acquisition system. Mediates the secretion of the hemophilin HphA across the outer membrane into the extracellular environment. Plays a supporting role for full virulence. The chain is Hemophilin secretion modulator from Acinetobacter baumannii.